The primary structure comprises 661 residues: Tegument protein UL46 homolog (661 aa).

The interval 1–31 (MFSRFARSFSSDDRTRKSYDGSYQSFNAGER) is disordered. Residues 10-19 (SSDDRTRKSY) show a composition bias toward basic and acidic residues. 2 helical membrane-spanning segments follow: residues 299 to 319 (AGTG…TALL) and 339 to 359 (AAIV…QYLI).

It belongs to the herpesviridae HHV-1 VP11/12 protein family. In terms of processing, phosphorylated by host LCK. The phosphorylation seems to be lymphocyte-specific.

Its subcellular location is the virion tegument. The protein localises to the host cytoplasm. It localises to the host membrane. Its function is as follows. Plays a role in the activation of the host PI3K/AKT pathway to promote cell survival. Interacts with and activates PI3KR1 in order to phosphorylate host AKT on its activating residues. Activates the host AP-1 pathway by triggering phosphorylation of host ERK1/2. Participates in host BIM and BAD phosphorylation, leading to apoptosis inhibition. The protein is Tegument protein UL46 homolog of Varicella-zoster virus (strain Oka vaccine) (HHV-3).